The following is a 451-amino-acid chain: Tubulin alpha-1A chain (451 aa).

The MREC motif motif lies at 1–4 (MREC). Residues Gln-11, Glu-71, Ser-140, Gly-144, Thr-145, Thr-179, Asn-206, and Asn-228 each contribute to the GTP site. Glu-71 contributes to the Mg(2+) binding site. Glu-254 is a catalytic residue. The tract at residues 432–451 (YEEVGVDSVEGEGEEEGEEY) is disordered. Glu-445 carries the post-translational modification 5-glutamyl polyglutamate.

The protein belongs to the tubulin family. In terms of assembly, dimer of alpha and beta chains. A typical microtubule is a hollow water-filled tube with an outer diameter of 25 nm and an inner diameter of 15 nM. Alpha-beta heterodimers associate head-to-tail to form protofilaments running lengthwise along the microtubule wall with the beta-tubulin subunit facing the microtubule plus end conferring a structural polarity. Microtubules usually have 13 protofilaments but different protofilament numbers can be found in some organisms and specialized cells. The cofactor is Mg(2+). Some glutamate residues at the C-terminus are polyglycylated, resulting in polyglycine chains on the gamma-carboxyl group. Glycylation is mainly limited to tubulin incorporated into axonemes (cilia and flagella) whereas glutamylation is prevalent in neuronal cells, centrioles, axonemes, and the mitotic spindle. Both modifications can coexist on the same protein on adjacent residues, and lowering polyglycylation levels increases polyglutamylation, and reciprocally. The precise function of polyglycylation is still unclear. In terms of processing, some glutamate residues at the C-terminus are polyglutamylated, resulting in polyglutamate chains on the gamma-carboxyl group. Polyglutamylation plays a key role in microtubule severing by spastin (SPAST). SPAST preferentially recognizes and acts on microtubules decorated with short polyglutamate tails: severing activity by SPAST increases as the number of glutamates per tubulin rises from one to eight, but decreases beyond this glutamylation threshold. Post-translationally, undergoes a tyrosination/detyrosination cycle, the cyclic removal and re-addition of a C-terminal tyrosine residue by the enzymes tubulin tyrosine carboxypeptidase (MATCAP1, VASH1 or VASH2) and tubulin tyrosine ligase (TTL), respectively. Tyrosination promotes microtubule interaction with CAP-Gly microtubule plus-end tracking proteins. Tyrosinated tubulins regulate the initiation of dynein-driven motility. In terms of processing, detyrosination is involved in metaphase plate congression by guiding chromosomes during mitosis. Detyrosination increases microtubules-dependent mechanotransduction in dystrophic cardiac and skeletal muscle. In cardiomyocytes, detyrosinated microtubules are required to resist to contractile compression during contraction.

The protein resides in the cytoplasm. Its subcellular location is the cytoskeleton. The enzyme catalyses GTP + H2O = GDP + phosphate + H(+). Tubulin is the major constituent of microtubules, a cylinder consisting of laterally associated linear protofilaments composed of alpha- and beta-tubulin heterodimers. Microtubules grow by the addition of GTP-tubulin dimers to the microtubule end, where a stabilizing cap forms. Below the cap, tubulin dimers are in GDP-bound state, owing to GTPase activity of alpha-tubulin. This is Tubulin alpha-1A chain (TUBA1A) from Gallus gallus (Chicken).